The chain runs to 591 residues: V-type ATP synthase alpha chain (591 aa).

Residue 232–239 (GPFGAGKT) coordinates ATP.

This sequence belongs to the ATPase alpha/beta chains family.

It catalyses the reaction ATP + H2O + 4 H(+)(in) = ADP + phosphate + 5 H(+)(out). Functionally, produces ATP from ADP in the presence of a proton gradient across the membrane. The V-type alpha chain is a catalytic subunit. This chain is V-type ATP synthase alpha chain, found in Nitrosococcus oceani (strain ATCC 19707 / BCRC 17464 / JCM 30415 / NCIMB 11848 / C-107).